The primary structure comprises 551 residues: Tripartite motif-containing protein 5 (551 aa).

Alanine 2 carries the N-acetylalanine modification. The RING-type zinc finger occupies 15–55; sequence CPICLELLTEPLSLDCGHSFCQACITANHKESRERSCPLCR. The residue at position 82 (serine 82) is a Phosphoserine. The segment at 87 to 128 adopts a B box-type zinc-finger fold; that stretch reads QKVDRCARHGEKLLLFCQQHGNVICWLCERSEEHRGHRTSLV. Zn(2+)-binding residues include cysteine 92, histidine 95, cysteine 114, and histidine 120. Residues 127 to 221 are a coiled coil; sequence LVEEVAQKYR…VQSENDMVLQ (95 aa). Positions 182-195 are required for interaction with GABARAP and for autophagy; that stretch reads FKQLRDILDCEESN. One can recognise a B30.2/SPRY domain in the interval 276–551; that stretch reads PDLKGMLQVF…LPMTLCSPSS (276 aa).

This sequence belongs to the TRIM/RBCC family. As to quaternary structure, can form homodimers and homotrimers. In addition to lower-order dimerization, also exhibits a higher-order multimerization and both low- and high-order multimerizations are essential for its restriction activity. Interacts with BTBD1 and BTBD2. Interacts with PSMC4, PSMC5, PSMD7 and HSPA8/HSC70. Interacts (via B30.2/SPRY domain) with HSPA1A/B. Interacts with PSMC2, MAP3K7/TAK1, TAB2 and TAB3. Interacts with SQSTM1. Interacts with TRIM6 and TRIM34. Interacts with ULK1 (phosphorylated form), GABARAP, GABARAPL1, GABARAPL2, MAP1LC3A, MAP1LC3C and BECN1. Post-translationally, degraded in a proteasome-independent fashion in the absence of viral infection but in a proteasome-dependent fashion following exposure to restriction sensitive virus. In terms of processing, autoubiquitinated in a RING finger- and UBE2D2-dependent manner. Monoubiquitinated by TRIM21. Deubiquitinated by Yersinia YopJ. Ubiquitination may not lead to proteasomal degradation.

Its subcellular location is the cytoplasm. The protein localises to the nucleus. The catalysed reaction is S-ubiquitinyl-[E2 ubiquitin-conjugating enzyme]-L-cysteine + [acceptor protein]-L-lysine = [E2 ubiquitin-conjugating enzyme]-L-cysteine + N(6)-ubiquitinyl-[acceptor protein]-L-lysine.. Its pathway is protein modification; protein ubiquitination. In terms of biological role, capsid-specific restriction factor that prevents infection from non-host-adapted retroviruses. Blocks viral replication early in the life cycle, after viral entry but before reverse transcription. In addition to acting as a capsid-specific restriction factor, also acts as a pattern recognition receptor that activates innate immune signaling in response to the retroviral capsid lattice. Binding to the viral capsid triggers its E3 ubiquitin ligase activity, and in concert with the heterodimeric ubiquitin conjugating enzyme complex UBE2V1-UBE2N (also known as UBC13-UEV1A complex) generates 'Lys-63'-linked polyubiquitin chains, which in turn are catalysts in the autophosphorylation of the MAP3K7/TAK1 complex (includes TAK1, TAB2, and TAB3). Activation of the MAP3K7/TAK1 complex by autophosphorylation results in the induction and expression of NF-kappa-B and MAPK-responsive inflammatory genes, thereby leading to an innate immune response in the infected cell. Plays a role in regulating autophagy through activation of autophagy regulator BECN1 by causing its dissociation from its inhibitors BCL2 and TAB2. This chain is Tripartite motif-containing protein 5 (TRIM5), found in Alouatta sara (Bolivian red howler monkey).